The following is a 350-amino-acid chain: MEERSMQKAGFLKEPIKHIGITKHNVVPMVEEMADMAFQARNLARAAFIVDLMQKDKECAVILTLAGSLISAGLKQVIIDMLEHNMVDVIVSTGANIVDQDFFEALGFKHWKGSQFVDDSELRELAIDRIYDTYIDEDELRVCDDTIAIIANSMQPGAYSSREFIVEMGKYIEEKGLDKNSIVYKAYEKGVPIFCPAFSDCSAGFGLVHHQWHNPDQHVSIDSVKDFRELTKIKIENDKTGIFMIGGGVPKNFTQDIVVAAEVLGYENVSMHTYAVQITVADERDGALSGSTLKEASSWGKVDTVYEQMVFAEATVAMPLIAGYAYHKRNWEGRPARNFNAMLDAKPVNA.

This sequence belongs to the deoxyhypusine synthase family.

The sequence is that of Deoxyhypusine synthase-like protein from Chlorobaculum tepidum (strain ATCC 49652 / DSM 12025 / NBRC 103806 / TLS) (Chlorobium tepidum).